The chain runs to 249 residues: Eukaryotic translation initiation factor 3 subunit J-A (249 aa).

Acidic residues predominate over residues 1-15; sequence MADADSWDADSFEPE. The disordered stretch occupies residues 1–104; that stretch reads MADADSWDAD…DTPLTPEDEL (104 aa). The span at 16–27 shows a compositional bias: basic and acidic residues; it reads EPIKKAAVHDKW. The segment covering 28–52 has biased composition (acidic residues); sequence EGEDEDDDVKDNWDDDEEEEKEEEE. Residues 34 to 96 are a coiled coil; the sequence is DDVKDNWDDD…QQLEETKRDT (63 aa). The span at 53–96 shows a compositional bias: basic and acidic residues; it reads EKKTEAKPTEKKKLSEKIKEKENLQRKKQEELRKQQLEETKRDT.

Belongs to the eIF-3 subunit J family. In terms of assembly, component of the eukaryotic translation initiation factor 3 (eIF-3) complex, which is composed of 13 subunits: eif3a, eif3b, eif3c, eif3d, eif3e, eif3f, eif3g, eif3h, eif3i, eif3j, eif3k, eif3l and eif3m.

It is found in the cytoplasm. Component of the eukaryotic translation initiation factor 3 (eIF-3) complex, which is involved in protein synthesis of a specialized repertoire of mRNAs and, together with other initiation factors, stimulates binding of mRNA and methionyl-tRNAi to the 40S ribosome. The eIF-3 complex specifically targets and initiates translation of a subset of mRNAs involved in cell proliferation. This chain is Eukaryotic translation initiation factor 3 subunit J-A (eif3ja), found in Danio rerio (Zebrafish).